We begin with the raw amino-acid sequence, 391 residues long: Chalcone synthase 2 (391 aa).

Residue cysteine 164 is part of the active site.

It belongs to the thiolase-like superfamily. Chalcone/stilbene synthases family.

It carries out the reaction (E)-4-coumaroyl-CoA + 3 malonyl-CoA + 3 H(+) = 2',4,4',6'-tetrahydroxychalcone + 3 CO2 + 4 CoA. It participates in secondary metabolite biosynthesis; flavonoid biosynthesis. Functionally, the primary product of this enzyme is 4,2',4',6'-tetrahydroxychalcone (also termed naringenin-chalcone or chalcone) which can under specific conditions spontaneously isomerize into naringenin. The polypeptide is Chalcone synthase 2 (CHS2) (Citrus sinensis (Sweet orange)).